We begin with the raw amino-acid sequence, 1041 residues long: Leucine-rich repeat receptor-like protein kinase TDR (1041 aa).

A signal peptide spans 1–29 (MKKKNISPSLVLHPLLLLLLPFFAFNSLA). Residues 30 to 652 (LKFSPQLLSL…HHKEERPKKT (623 aa)) lie on the Extracellular side of the membrane. A disulfide bridge links Cys-69 with Cys-76. Residues Asn-78, Asn-92, and Asn-111 are each glycosylated (N-linked (GlcNAc...) asparagine). LRR repeat units follow at residues 80–104 (TAQV…IRYL), 105–128 (SSLL…IFDL), 130–152 (KLTT…ISKL), 154–176 (FLKV…VSRL), 177–199 (RFLE…AYGG), 200–224 (LQRL…LGLL), 225–248 (TELQ…FALL), 250–272 (NLKY…LGNL), 273–296 (SNLE…YSNL), 297–319 (KSLK…GFST), 321–344 (KNLT…IGEL), 345–368 (PELT…LGSN), 369–392 (GKLE…LCHG), 394–416 (KLYK…LTRC), 418–439 (SLWR…GFGS), 440–464 (LRNL…FATA), 466–488 (VLQY…IWKA), 511–535 (CKSF…IGHC), 536–558 (EKLL…EIST), 559–583 (LPSI…FGSS), and 585–607 (TITT…SFAH). The interval 186–188 (GSY) is CLE peptide binding. Positions 233–235 (GYN) are CLE peptide binding. N-linked (GlcNAc...) asparagine glycosylation is found at Asn-258 and Asn-271. The tract at residues 303–307 (DFSSN) is CLE peptide binding. Asn-322, Asn-332, and Asn-356 each carry an N-linked (GlcNAc...) asparagine glycan. Positions 375-377 (DVS) are CLE peptide binding. N-linked (GlcNAc...) asparagine glycosylation is present at Asn-378. Residues Cys-390 and Cys-416 are joined by a disulfide bond. A CLE peptide binding region spans residues 421–423 (RFR). N-linked (GlcNAc...) asparagine glycans are attached at residues Asn-430, Asn-442, Asn-471, Asn-525, and Asn-542. A disulfide bridge connects residues Cys-511 and Cys-535. Asn-590 carries N-linked (GlcNAc...) asparagine glycosylation. Cys-620 and Cys-628 are joined by a disulfide. The chain crosses the membrane as a helical span at residues 653-673 (AGAIVWILAAAIGVGFFVLVA). Over 674 to 1041 (ATRCFQKSYG…HDVKCQRIGV (368 aa)) the chain is Cytoplasmic. Thr-710 is modified (phosphothreonine). Positions 719–1001 (SKTDNILGMG…DVLLILQEAK (283 aa)) constitute a Protein kinase domain. ATP-binding positions include 725 to 733 (LGMGSTGTV) and Lys-747. Residues Tyr-798 and Tyr-839 each carry the phosphotyrosine modification. Asp-852 acts as the Proton acceptor in catalysis. Residue Ser-884 is modified to Phosphoserine. A phosphotyrosine mark is found at Tyr-892 and Tyr-899. A Phosphothreonine modification is found at Thr-900.

It belongs to the protein kinase superfamily. Ser/Thr protein kinase family. Interacts specifically with the mature peptides CLE41p and CLE44p, especially in the presence of SERK2. Interacts with LURE1.2. In terms of tissue distribution, widely expressed along the vascular strands. In roots and hypocotyls, confined to procambial cells.

The protein resides in the cell membrane. The enzyme catalyses L-seryl-[protein] + ATP = O-phospho-L-seryl-[protein] + ADP + H(+). It catalyses the reaction L-threonyl-[protein] + ATP = O-phospho-L-threonyl-[protein] + ADP + H(+). Acts with CLE41p and CLE44p peptides as a ligand-receptor pair in a signal transduction pathway involved in the regulation of procambium maintenance and polarity during vascular-tissue development. Mediates repression of tracheary element differentiation and the promotion of procambial cells formation and polar division adjacent to phloem cells in the veins. The sequence is that of Leucine-rich repeat receptor-like protein kinase TDR from Arabidopsis thaliana (Mouse-ear cress).